The following is a 252-amino-acid chain: Imidazole glycerol phosphate synthase subunit HisF (252 aa).

Residues aspartate 11 and aspartate 130 contribute to the active site.

Belongs to the HisA/HisF family. Heterodimer of HisH and HisF.

The protein resides in the cytoplasm. It catalyses the reaction 5-[(5-phospho-1-deoxy-D-ribulos-1-ylimino)methylamino]-1-(5-phospho-beta-D-ribosyl)imidazole-4-carboxamide + L-glutamine = D-erythro-1-(imidazol-4-yl)glycerol 3-phosphate + 5-amino-1-(5-phospho-beta-D-ribosyl)imidazole-4-carboxamide + L-glutamate + H(+). The protein operates within amino-acid biosynthesis; L-histidine biosynthesis; L-histidine from 5-phospho-alpha-D-ribose 1-diphosphate: step 5/9. Its function is as follows. IGPS catalyzes the conversion of PRFAR and glutamine to IGP, AICAR and glutamate. The HisF subunit catalyzes the cyclization activity that produces IGP and AICAR from PRFAR using the ammonia provided by the HisH subunit. This chain is Imidazole glycerol phosphate synthase subunit HisF, found in Sulfurihydrogenibium sp. (strain YO3AOP1).